We begin with the raw amino-acid sequence, 720 residues long: Serrate RNA effector molecule (720 aa).

3 disordered regions span residues 1-192 (MADV…NPQR), 288-335 (LNKS…FTSD), and 361-380 (ENVLQGSETEKSGREKLHSG). Over residues 33–47 (SLPQQEQEQDQQQLP) the composition is skewed to low complexity. Positions 48-76 (LRRERDSRERRDERDIERPPPNRRERDRS) are enriched in basic and acidic residues. Phosphoserine is present on residues S76, S90, and S92. The segment covering 99–115 (DRRHSPPQRRSPPQKRY) has biased composition (basic residues). 2 stretches are compositionally biased toward basic and acidic residues: residues 116–126 (RRDDNGYDGRR) and 136–164 (PDRRFGYDHGGGYDREMGGRPGYGDERPH). Over residues 288–297 (LNKSGRTSEP) the composition is skewed to polar residues. A compositionally biased stretch (basic and acidic residues) spans 368-378 (ETEKSGREKLH). The C2H2-type zinc-finger motif lies at 498–523 (YGCGAKGCTKLFHAAEFVYKHLKLKH). Disordered stretches follow at residues 543 to 622 (YMND…AFGG) and 666 to 687 (RDPSGPNPPFEGSGRGGPAPFL). Basic and acidic residues predominate over residues 570-607 (PSMENRLRDDRGGRRERDGRANGNDRNDRSEDQQRGDN). The segment covering 608-622 (DGGNPGEVGYDAFGG) has biased composition (gly residues). S689 is modified (phosphoserine).

This sequence belongs to the ARS2 family. As to quaternary structure, interacts with HYL1. Interacts with RCF3, RS40 and RS41. In terms of tissue distribution, expressed in shoot meristems and in emerging organ primordia throughout development.

It localises to the nucleus. The protein resides in the nucleus speckle. In terms of biological role, acts as a mediator between the cap-binding complex (CBC) and both the pre-mRNA splicing and primary microRNAs (miRNAs) processing machinery. Required for proper processing of primary miRNAs to miRNAs, thereby playing a role in RNA-mediated gene silencing (RNAi) by miRNAs. Does not participate in sense post-transcriptional gene silencing. Acts as a regulator of meristem activity and adaxial leaf fate via the miRNA gene-silencing pathway by regulating the expression of PHB and by limiting the competence of shoot tissue to respond to KNOX expression. Its function is however not limited to miRNA-mediated repression of leaf polarity genes, but rather acts as a general regulator of primary microRNAs processing. Also critical for the accumulation of the trans-acting small interfering RNA (ta-siRNA). Required for pre-mRNA splicing. The protein is Serrate RNA effector molecule (SE) of Arabidopsis thaliana (Mouse-ear cress).